The primary structure comprises 132 residues: Agouti-signaling protein (132 aa).

An N-terminal signal peptide occupies residues 1–22 (MDVTRLLLATLLVFLCFFTVYS). A glycan (N-linked (GlcNAc...) asparagine) is linked at Asn39. The segment at 62–88 (ISRKEAEKKRSSKKEASMKKVAQPRTP) is disordered. The segment covering 63–79 (SRKEAEKKRSSKKEASM) has biased composition (basic and acidic residues). 5 disulfide bridges follow: Cys93-Cys108, Cys100-Cys114, Cys107-Cys125, Cys111-Cys132, and Cys116-Cys123. The 40-residue stretch at 93–132 (CVATRYSCKPPAPACCDPCASCQCRFFRSACSCRVLRLNC) folds into the Agouti domain.

Its subcellular location is the secreted. Its function is as follows. Involved in the regulation of melanogenesis. The binding of ASP to MC1R precludes alpha-MSH initiated signaling and thus blocks production of cAMP, leading to a down-regulation of eumelanogenesis (brown/black pigment) and thus increasing synthesis of pheomelanin (yellow/red pigment). This Semnopithecus entellus (Northern plains gray langur) protein is Agouti-signaling protein (ASIP).